The chain runs to 144 residues: Cytochrome c oxidase subunit 4 isoform 1, mitochondrial (144 aa).

Over 1–73 (SVVKSEDFSL…SFAEMNRGSN (73 aa)) the chain is Mitochondrial matrix. Lys4 bears the N6-acetyllysine; alternate mark. Position 4 is an N6-succinyllysine; alternate (Lys4). N6-acetyllysine is present on Lys28. Phosphoserine is present on residues Ser31 and Ser33. Lys35 is subject to N6-acetyllysine; alternate. N6-succinyllysine; alternate is present on Lys35. N6-acetyllysine is present on Lys42. A helical transmembrane segment spans residues 74 to 99 (EWKTVVGGAMFFIGFTALIIMWQKHY). Residues 100–144 (VYGPLPQTFDKEWVGKQTKRMLDMKVNPIQGLASKWDYEKNEWKK) are Mitochondrial intermembrane-facing.

It belongs to the cytochrome c oxidase IV family. As to quaternary structure, component of the cytochrome c oxidase (complex IV, CIV), a multisubunit enzyme composed of 14 subunits. The complex is composed of a catalytic core of 3 subunits MT-CO1, MT-CO2 and MT-CO3, encoded in the mitochondrial DNA, and 11 supernumerary subunits COX4I, COX5A, COX5B, COX6A, COX6B, COX6C, COX7A, COX7B, COX7C, COX8 and NDUFA4, which are encoded in the nuclear genome. The complex exists as a monomer or a dimer and forms supercomplexes (SCs) in the inner mitochondrial membrane with NADH-ubiquinone oxidoreductase (complex I, CI) and ubiquinol-cytochrome c oxidoreductase (cytochrome b-c1 complex, complex III, CIII), resulting in different assemblies (supercomplex SCI(1)III(2)IV(1) and megacomplex MCI(2)III(2)IV(2)). Interacts with PHB2; the interaction decreases in absence of SPHK2. Interacts with AFG1L. Interacts with ABCB7; this interaction allows the regulation of cellular iron homeostasis and cellular reactive oxygen species (ROS) levels in cardiomyocytes. Interacts with FLVCR2; this interaction occurs in the absence of heme and is disrupted upon heme binding. Interacts with IRGC.

Its subcellular location is the mitochondrion inner membrane. It participates in energy metabolism; oxidative phosphorylation. Its function is as follows. Component of the cytochrome c oxidase, the last enzyme in the mitochondrial electron transport chain which drives oxidative phosphorylation. The respiratory chain contains 3 multisubunit complexes succinate dehydrogenase (complex II, CII), ubiquinol-cytochrome c oxidoreductase (cytochrome b-c1 complex, complex III, CIII) and cytochrome c oxidase (complex IV, CIV), that cooperate to transfer electrons derived from NADH and succinate to molecular oxygen, creating an electrochemical gradient over the inner membrane that drives transmembrane transport and the ATP synthase. Cytochrome c oxidase is the component of the respiratory chain that catalyzes the reduction of oxygen to water. Electrons originating from reduced cytochrome c in the intermembrane space (IMS) are transferred via the dinuclear copper A center (CU(A)) of subunit 2 and heme A of subunit 1 to the active site in subunit 1, a binuclear center (BNC) formed by heme A3 and copper B (CU(B)). The BNC reduces molecular oxygen to 2 water molecules using 4 electrons from cytochrome c in the IMS and 4 protons from the mitochondrial matrix. This chain is Cytochrome c oxidase subunit 4 isoform 1, mitochondrial (COX4I1), found in Hylobates agilis (Agile gibbon).